Reading from the N-terminus, the 163-residue chain is Putative H/ACA ribonucleoprotein complex subunit 2-like protein (163 aa).

This sequence belongs to the eukaryotic ribosomal protein eL8 family. As to quaternary structure, component of the small nucleolar ribonucleoprotein particle containing H/ACA-type snoRNAs (H/ACA snoRNPs).

Its subcellular location is the nucleus. The protein localises to the nucleolus. Required for ribosome biogenesis. Part of a complex which catalyzes pseudouridylation of rRNA. This involves the isomerization of uridine such that the ribose is subsequently attached to C5, instead of the normal N1. Pseudouridine ('psi') residues may serve to stabilize the conformation of rRNAs. In Caenorhabditis briggsae, this protein is Putative H/ACA ribonucleoprotein complex subunit 2-like protein.